Reading from the N-terminus, the 273-residue chain is Ribosomal RNA small subunit methyltransferase A (273 aa).

Residues Asn23, Ile25, Gly50, Glu72, Asp97, and Asn116 each coordinate S-adenosyl-L-methionine.

The protein belongs to the class I-like SAM-binding methyltransferase superfamily. rRNA adenine N(6)-methyltransferase family. RsmA subfamily.

It is found in the cytoplasm. The enzyme catalyses adenosine(1518)/adenosine(1519) in 16S rRNA + 4 S-adenosyl-L-methionine = N(6)-dimethyladenosine(1518)/N(6)-dimethyladenosine(1519) in 16S rRNA + 4 S-adenosyl-L-homocysteine + 4 H(+). In terms of biological role, specifically dimethylates two adjacent adenosines (A1518 and A1519) in the loop of a conserved hairpin near the 3'-end of 16S rRNA in the 30S particle. May play a critical role in biogenesis of 30S subunits. The chain is Ribosomal RNA small subunit methyltransferase A from Rickettsia akari (strain Hartford).